The sequence spans 403 residues: RUN domain-containing protein 3B (403 aa).

Positions 1–20 are disordered; the sequence is MASRSLGGLSGSRGGGKKSL. Arginine 13 carries the omega-N-methylarginine modification. Positions 53–185 constitute an RUN domain; the sequence is DDSSPEFNNF…IDFSFCLKGE (133 aa). The interval 207 to 232 is disordered; that stretch reads SDSISSDEEELRTFGSSDSEGSTPEN. 2 positions are modified to phosphoserine: serine 211 and serine 212. Positions 220-231 are enriched in polar residues; that stretch reads FGSSDSEGSTPE. The stretch at 296–321 forms a coiled coil; it reads AHKLEKEQLEYIIVELQDQLKSYQSL.

It belongs to the RUNDC3 family. Interacts with RAP2A.

The chain is RUN domain-containing protein 3B (Rundc3b) from Rattus norvegicus (Rat).